A 162-amino-acid polypeptide reads, in one-letter code: Precursor protein UG (162 aa).

The signal sequence occupies residues 1-19 (MERILLCFIVATLVAISMA). The propeptide occupies 20-23 (NPRP). 2 cysteine pairs are disulfide-bonded: C30–C42 and C33–C49. Residues 56–59 (VPKP) constitute a propeptide that is removed on maturation. 2 disulfide bridges follow: C66-C78 and C69-C85. Residues 92 to 95 (VPKP) constitute a propeptide that is removed on maturation. Intrachain disulfides connect C102-C114 and C105-C121. A propeptide spanning residues 128 to 131 (VPKP) is cleaved from the precursor. Intrachain disulfides connect C138/C150 and C141/C157.

Belongs to the sea anemone BBH family.

The protein resides in the secreted. Its subcellular location is the nematocyst. Affects the ASIC3 channel (ACCN3) and produces analgesic effects. It produces a reversible inhibition effect on both the transient and the sustained current of human ASIC3 channels expressed in X.laevis oocytes. It completely blocks the transient component (IC(50)=10 uM) and partially (48%) inhibits the amplitude of the sustained component (IC(50)=1.44 uM). Using in vivo tests in mice, it reverses inflammatory and acid-induced pain. Functionally, does not affect the ASIC3 channel. Does not cause lethality or paralysis of noble crayfish (A.astacus) at a dose of 1 mg/kg. This chain is Precursor protein UG, found in Urticina grebelnyi (Painted anemone).